Consider the following 427-residue polypeptide: 3-phosphoshikimate 1-carboxyvinyltransferase (427 aa).

Residues Lys20, Ser21, and Arg25 each coordinate 3-phosphoshikimate. A phosphoenolpyruvate-binding site is contributed by Lys20. Phosphoenolpyruvate-binding residues include Gly92 and Arg120. Residues Ser166, Gln168, Asp312, and Lys339 each coordinate 3-phosphoshikimate. Gln168 provides a ligand contact to phosphoenolpyruvate. Residue Asp312 is the Proton acceptor of the active site. Phosphoenolpyruvate is bound by residues Arg343 and Arg385.

It belongs to the EPSP synthase family. Monomer.

The protein resides in the cytoplasm. The enzyme catalyses 3-phosphoshikimate + phosphoenolpyruvate = 5-O-(1-carboxyvinyl)-3-phosphoshikimate + phosphate. Its pathway is metabolic intermediate biosynthesis; chorismate biosynthesis; chorismate from D-erythrose 4-phosphate and phosphoenolpyruvate: step 6/7. Catalyzes the transfer of the enolpyruvyl moiety of phosphoenolpyruvate (PEP) to the 5-hydroxyl of shikimate-3-phosphate (S3P) to produce enolpyruvyl shikimate-3-phosphate and inorganic phosphate. The chain is 3-phosphoshikimate 1-carboxyvinyltransferase from Streptococcus thermophilus (strain ATCC BAA-491 / LMD-9).